The primary structure comprises 1240 residues: DNA excision repair protein ERCC-6-like (1240 aa).

Residue serine 14 is modified to Phosphoserine. The TPR 1 repeat unit spans residues 21–54 (YLRYVQEAKEAAKNGDLEESLKLFNLAKDIFPTK). Positions 110-278 (SLYKDGRKGG…WSLFDFACQG (169 aa)) constitute a Helicase ATP-binding domain. Residue 123 to 130 (DDMGLGKT) participates in ATP binding. The DEAH box signature appears at 229-232 (DEAH). A Helicase C-terminal domain is found at 467 to 631 (FLMSLLERLQ…FTKQELKELF (165 aa)). The segment at 736 to 760 (FPSQQKKKGTEFNKPQPQPSRLLTK) is disordered. Positions 748 to 760 (NKPQPQPSRLLTK) are enriched in polar residues. Residues serine 755 and serine 773 each carry the phosphoserine modification. The tract at residues 778 to 813 (DQSAESEPQEHSEVHDVTSLQGSHHFNSTSDAGTIA) is disordered. The span at 795–809 (TSLQGSHHFNSTSDA) shows a compositional bias: polar residues. At serine 821 the chain carries Phosphoserine. The tract at residues 845-879 (QKKGLQASPGQEAPSENLGSFHYLPRESSKASLGP) is disordered. Serine 966, serine 998, serine 1001, and serine 1021 each carry phosphoserine. A disordered region spans residues 974 to 1085 (KEKSLQSPAA…EVNTSLHSRR (112 aa)). Positions 978-998 (LQSPAANSRAKSALTLSLDSS) are enriched in polar residues. Residues 1049-1065 (SVKQFDASTPQSGSNPS) are compositionally biased toward polar residues. Threonine 1057 is subject to Phosphothreonine. 2 positions are modified to phosphoserine: serine 1092 and serine 1112. A compositionally biased stretch (acidic residues) spans 1104-1117 (MEERLDNSSEEESE). The disordered stretch occupies residues 1104 to 1185 (MEERLDNSSE…MPDPPQDLAV (82 aa)). Polar residues predominate over residues 1135–1165 (EQPSGATLASGNKSSNLTMSEPTSPAPQSSP). Position 1172 is a phosphoserine (serine 1172). The stretch at 1191-1224 (YESLVARGKELKECGKIQEALNCLVKALDIKSAD) is one TPR 2 repeat.

This sequence belongs to the SNF2/RAD54 helicase family. As to quaternary structure, interacts with PLK1, which phosphorylates it. Both proteins are mutually dependent on each other for correct subcellular localization. Interacts (via N-terminal TPR repeat) with BEND3 (via BEN domains 1 and 3); the interaction is direct. In terms of processing, phosphorylation by PLK1 prevents the association with chromosome arms and restricts its localization to the kinetochore-centromere region. In terms of tissue distribution, expressed mainly in the neural tube and heart of 10.5 dpc embryo. Significantly down-regulated after alcohol exposure in embryonic brain and heart, but not in embryonic kidney, liver, or lung.

The protein resides in the chromosome. It is found in the centromere. Its subcellular location is the kinetochore. It carries out the reaction ATP + H2O = ADP + phosphate + H(+). DNA helicase that acts as a tension sensor that associates with catenated DNA which is stretched under tension until it is resolved during anaphase. Functions as ATP-dependent DNA translocase. Can promote Holliday junction branch migration (in vitro). The protein is DNA excision repair protein ERCC-6-like (Ercc6l) of Mus musculus (Mouse).